We begin with the raw amino-acid sequence, 336 residues long: MTDLNDNICKRYIKMITNIVILSLIICISLAFWIISMTASTYYGNLRPISPWRWLFSVVVPVLIVSNGLKKKSLDHSGALGGLVVGFILTIANFSFFTSLLMFFLSSSKLTKWKGEVKKRLDSEYKEGGQRNWVQVFCNGAVPTELALLYMIENGPGEIPVDFSKQYSASWMCLSLLAALACSAGDTWASEVGPVLSKSSPRLITTWEKVPVGTNGGVTVVGLVSSLLGGTFVGIAYFLTQLIFVNDLDISAPQWPIIAFGGLAGLLGSIVDSYLGATMQYTGLDESTGMVVNSPTNKARHIAGKPILDNNAVNLFSSVLIALLLPTAAWGFWPRG.

A run of 6 helical transmembrane segments spans residues Met15–Ile35, Ile49–Leu69, Val84–Phe104, Val218–Phe238, Ile257–Ala277, and Val313–Trp333.

This sequence belongs to the TMEM19 family.

The protein localises to the membrane. The chain is Transmembrane protein 19 (TMEM19) from Homo sapiens (Human).